The chain runs to 430 residues: Adenylosuccinate synthetase (430 aa).

GTP-binding positions include 12-18 (GDEGKGK) and 40-42 (GHT). Catalysis depends on aspartate 13, which acts as the Proton acceptor. Residues aspartate 13 and glycine 40 each contribute to the Mg(2+) site. Residues 13–16 (DEGK), 38–41 (NAGH), threonine 128, arginine 142, glutamine 223, threonine 238, and arginine 302 contribute to the IMP site. Histidine 41 acts as the Proton donor in catalysis. 298–304 (TTTGRPR) serves as a coordination point for substrate. GTP contacts are provided by residues arginine 304, 330 to 332 (SID), and 412 to 414 (SVG).

The protein belongs to the adenylosuccinate synthetase family. As to quaternary structure, homodimer. Mg(2+) serves as cofactor.

Its subcellular location is the cytoplasm. It catalyses the reaction IMP + L-aspartate + GTP = N(6)-(1,2-dicarboxyethyl)-AMP + GDP + phosphate + 2 H(+). The protein operates within purine metabolism; AMP biosynthesis via de novo pathway; AMP from IMP: step 1/2. In terms of biological role, plays an important role in the de novo pathway of purine nucleotide biosynthesis. Catalyzes the first committed step in the biosynthesis of AMP from IMP. This chain is Adenylosuccinate synthetase, found in Enterococcus faecalis (strain ATCC 700802 / V583).